The chain runs to 118 residues: MARVKRGVIARARHKKVLKQAKGYYGARSRVYRVAFQAVIKAGQYAYRDRRQRKRQFRQLWIARINAAARQNGISYSRFINGLKKASVEIDRKILADIAVFDKVAFTALVEKAKVALA.

The protein belongs to the bacterial ribosomal protein bL20 family.

Binds directly to 23S ribosomal RNA and is necessary for the in vitro assembly process of the 50S ribosomal subunit. It is not involved in the protein synthesizing functions of that subunit. This chain is Large ribosomal subunit protein bL20, found in Edwardsiella ictaluri (strain 93-146).